A 142-amino-acid chain; its full sequence is Hemoglobin subunit alpha (142 aa).

One can recognise a Globin domain in the interval 1–142 (GLTAADKTLI…VEKALFETYR (142 aa)). H59 serves as a coordination point for O2. H88 is a binding site for heme b.

This sequence belongs to the globin family. As to quaternary structure, heterotetramer of two alpha chains and two beta chains (an easy dimerization is also reported). Red blood cells.

Functionally, involved in oxygen transport from the lung to the various peripheral tissues. This Latimeria chalumnae (Coelacanth) protein is Hemoglobin subunit alpha (HBA).